The primary structure comprises 300 residues: N-acetylmuramic acid 6-phosphate etherase (300 aa).

The region spanning 55–217 (IAERLRAGGR…STGAMIRLGK (163 aa)) is the SIS domain. The active-site Proton donor is the glutamate 83. Residue glutamate 114 is part of the active site.

The protein belongs to the GCKR-like family. MurNAc-6-P etherase subfamily. Homodimer.

It carries out the reaction N-acetyl-D-muramate 6-phosphate + H2O = N-acetyl-D-glucosamine 6-phosphate + (R)-lactate. The protein operates within amino-sugar metabolism; N-acetylmuramate degradation. In terms of biological role, specifically catalyzes the cleavage of the D-lactyl ether substituent of MurNAc 6-phosphate, producing GlcNAc 6-phosphate and D-lactate. This Symbiobacterium thermophilum (strain DSM 24528 / JCM 14929 / IAM 14863 / T) protein is N-acetylmuramic acid 6-phosphate etherase.